Reading from the N-terminus, the 111-residue chain is Large ribosomal subunit protein P2w (111 aa).

The segment at 63-111 (ASVPSGGGVAVSAAPSSGGGGAAAPAEKKEAKKEEKEESDDDMGFSLFE) is disordered. Over residues 88 to 98 (AEKKEAKKEEK) the composition is skewed to basic and acidic residues. Residue Ser-101 is modified to Phosphoserine.

This sequence belongs to the eukaryotic ribosomal protein P1/P2 family. In terms of assembly, P1 and P2 exist as dimers at the large ribosomal subunit.

In terms of biological role, plays an important role in the elongation step of protein synthesis. The sequence is that of Large ribosomal subunit protein P2w (RPP2D) from Arabidopsis thaliana (Mouse-ear cress).